The sequence spans 263 residues: MPEGPEIRRAADNLEAAIKGKPLTDVWFAFAQLKPYESQLTGQLVTRIETRGKALLTHFSNGLTLYSHNQLYGVWRVIDTGEIPQTTRILRVRLQTADKTILLYSASDIEMLTAEQLTTHPFLQRVGPDVLDARLTPEEVKVRLLSPRFRNRQFSGLLLDQAFLAGLGNYLRVEILWQVGLTGQHKAKDLNEAQLNALSHALLDIPRLSYTTRGQSDENKHHGALFRFKVFHRDGEACERCGGIIEKTTLSSRPFYWCPHCQK.

Pro-2 acts as the Schiff-base intermediate with DNA in catalysis. Glu-3 (proton donor) is an active-site residue. Residue Lys-53 is the Proton donor; for beta-elimination activity of the active site. 3 residues coordinate DNA: Gln-70, Arg-125, and Asn-169. The segment at 229–263 (KVFHRDGEACERCGGIIEKTTLSSRPFYWCPHCQK) adopts an FPG-type zinc-finger fold. The active-site Proton donor; for delta-elimination activity is the Arg-253.

It belongs to the FPG family. The cofactor is Zn(2+).

It carries out the reaction 2'-deoxyribonucleotide-(2'-deoxyribose 5'-phosphate)-2'-deoxyribonucleotide-DNA = a 3'-end 2'-deoxyribonucleotide-(2,3-dehydro-2,3-deoxyribose 5'-phosphate)-DNA + a 5'-end 5'-phospho-2'-deoxyribonucleoside-DNA + H(+). In terms of biological role, involved in base excision repair of DNA damaged by oxidation or by mutagenic agents. Acts as a DNA glycosylase that recognizes and removes damaged bases. Has a preference for oxidized pyrimidines, such as thymine glycol, 5,6-dihydrouracil and 5,6-dihydrothymine. Has AP (apurinic/apyrimidinic) lyase activity and introduces nicks in the DNA strand. Cleaves the DNA backbone by beta-delta elimination to generate a single-strand break at the site of the removed base with both 3'- and 5'-phosphates. This chain is Endonuclease 8, found in Salmonella dublin (strain CT_02021853).